Consider the following 123-residue polypeptide: Defensin beta 118 (123 aa).

The signal sequence occupies residues methionine 1 to proline 19. Disulfide bonds link cysteine 27–cysteine 54, cysteine 34–cysteine 48, and cysteine 38–cysteine 55. Positions valine 65–serine 123 are excised as a propeptide. Over residues lysine 100–arginine 110 the composition is skewed to basic and acidic residues. Residues lysine 100–serine 123 form a disordered region. Positions threonine 112 to serine 123 are enriched in polar residues.

The protein belongs to the beta-defensin family. In terms of processing, the three-dimensional structure formed by the three intramolecular disulfide bridges is indispensable for antimicrobial activity.

The protein localises to the secreted. Functionally, host defense peptide that exhibits antimicrobial activity against both Gram-negative bacteria, such as E.coli and S.typhimurium, and Gram-positive bacteria, such as S.aureus and B.subtilis. Inhibits cell adhesion of E.coli on intestinal epithelial enterocytes. Causes rapid permeabilization of both the outer and inner membrane of E.coli, leading to morphological alterations on the bacterial surface. Binds to bacterial lipopolysaccharides (LPS) with high affinity, and may thereby be involved in immunoregulation through LPS neutralization. May contribute to epididymal innate immunity and protect the sperm against attack by microorganisms. This is Defensin beta 118 (DEFB118) from Pan troglodytes (Chimpanzee).